Here is a 198-residue protein sequence, read N- to C-terminus: ATP-dependent Clp protease proteolytic subunit 1 (198 aa).

S98 (nucleophile) is an active-site residue. H123 is a catalytic residue.

This sequence belongs to the peptidase S14 family. As to quaternary structure, fourteen ClpP subunits assemble into 2 heptameric rings which stack back to back to give a disk-like structure with a central cavity, resembling the structure of eukaryotic proteasomes.

The protein resides in the cytoplasm. It catalyses the reaction Hydrolysis of proteins to small peptides in the presence of ATP and magnesium. alpha-casein is the usual test substrate. In the absence of ATP, only oligopeptides shorter than five residues are hydrolyzed (such as succinyl-Leu-Tyr-|-NHMec, and Leu-Tyr-Leu-|-Tyr-Trp, in which cleavage of the -Tyr-|-Leu- and -Tyr-|-Trp bonds also occurs).. In terms of biological role, cleaves peptides in various proteins in a process that requires ATP hydrolysis. Has a chymotrypsin-like activity. Plays a major role in the degradation of misfolded proteins. ClpXP1 is involved in the complete degradation of the Site-2 clipped anti-sigma-W factor RsiW. This results in the release of SigW and the transcription activation of the genes under the control of the sigma-W factor. This is ATP-dependent Clp protease proteolytic subunit 1 from Bacillus licheniformis (strain ATCC 14580 / DSM 13 / JCM 2505 / CCUG 7422 / NBRC 12200 / NCIMB 9375 / NCTC 10341 / NRRL NRS-1264 / Gibson 46).